We begin with the raw amino-acid sequence, 159 residues long: Probable cyclic pyranopterin monophosphate synthase (159 aa).

Residues 75 to 77 and 111 to 112 each bind substrate; these read LCH and ME. D126 is a catalytic residue.

It belongs to the MoaC family. Homohexamer; trimer of dimers.

The enzyme catalyses (8S)-3',8-cyclo-7,8-dihydroguanosine 5'-triphosphate = cyclic pyranopterin phosphate + diphosphate. The protein operates within cofactor biosynthesis; molybdopterin biosynthesis. In terms of biological role, catalyzes the conversion of (8S)-3',8-cyclo-7,8-dihydroguanosine 5'-triphosphate to cyclic pyranopterin monophosphate (cPMP). In Pyrococcus horikoshii (strain ATCC 700860 / DSM 12428 / JCM 9974 / NBRC 100139 / OT-3), this protein is Probable cyclic pyranopterin monophosphate synthase.